Here is a 388-residue protein sequence, read N- to C-terminus: Flap endonuclease 1 (388 aa).

The interval 1–104 is N-domain; the sequence is MGILGLSKLI…GELAKRAERR (104 aa). Asp-34 serves as a coordination point for Mg(2+). DNA is bound by residues Arg-47 and Arg-70. Residues Asp-86, Glu-158, Glu-160, Asp-179, and Asp-181 each contribute to the Mg(2+) site. The I-domain stretch occupies residues 122-253; it reads EIEKFNRRLV…KRAIELINNY (132 aa). DNA is bound at residue Glu-158. Gly-231 and Asp-233 together coordinate DNA. Asp-233 is a binding site for Mg(2+). The tract at residues 336–344 is interaction with PCNA; it reads TQVRLDSFF. The tract at residues 343–388 is disordered; it reads FFKTLPSTPSATNAAKRKAEEAKKSANNKKAKTSGGGGGGRGRRPK.

It belongs to the XPG/RAD2 endonuclease family. FEN1 subfamily. As to quaternary structure, interacts with PCNA. Three molecules of FEN1 bind to one PCNA trimer with each molecule binding to one PCNA monomer. PCNA stimulates the nuclease activity without altering cleavage specificity. Mg(2+) serves as cofactor. In terms of processing, phosphorylated. Phosphorylation upon DNA damage induces relocalization to the nuclear plasma.

The protein localises to the nucleus. It is found in the nucleolus. Its subcellular location is the nucleoplasm. It localises to the mitochondrion. In terms of biological role, structure-specific nuclease with 5'-flap endonuclease and 5'-3' exonuclease activities involved in DNA replication and repair. During DNA replication, cleaves the 5'-overhanging flap structure that is generated by displacement synthesis when DNA polymerase encounters the 5'-end of a downstream Okazaki fragment. It enters the flap from the 5'-end and then tracks to cleave the flap base, leaving a nick for ligation. Also involved in the long patch base excision repair (LP-BER) pathway, by cleaving within the apurinic/apyrimidinic (AP) site-terminated flap. Acts as a genome stabilization factor that prevents flaps from equilibrating into structures that lead to duplications and deletions. Also possesses 5'-3' exonuclease activity on nicked or gapped double-stranded DNA, and exhibits RNase H activity. Also involved in replication and repair of rDNA and in repairing mitochondrial DNA. The chain is Flap endonuclease 1 from Drosophila ananassae (Fruit fly).